The primary structure comprises 173 residues: UPF0598 protein F59C6.12 (173 aa).

The protein belongs to the UPF0598 family.

The protein is UPF0598 protein F59C6.12 of Caenorhabditis elegans.